Consider the following 208-residue polypeptide: Urease accessory protein UreG 1 (208 aa).

14–21 (GPVGSGKT) serves as a coordination point for GTP.

It belongs to the SIMIBI class G3E GTPase family. UreG subfamily. As to quaternary structure, homodimer. UreD, UreF and UreG form a complex that acts as a GTP-hydrolysis-dependent molecular chaperone, activating the urease apoprotein by helping to assemble the nickel containing metallocenter of UreC. The UreE protein probably delivers the nickel.

Its subcellular location is the cytoplasm. Functionally, facilitates the functional incorporation of the urease nickel metallocenter. This process requires GTP hydrolysis, probably effectuated by UreG. Disruption of the ure1 gene cluster suggests that it protects brucellae during their passage through the stomach. The major route of infection in human brucellosis is oral. This Brucella abortus (strain 2308) protein is Urease accessory protein UreG 1.